The following is a 201-amino-acid chain: LexA repressor (201 aa).

The H-T-H motif DNA-binding region spans L28–E48. Active-site for autocatalytic cleavage activity residues include S120 and K157.

It belongs to the peptidase S24 family. As to quaternary structure, homodimer.

The catalysed reaction is Hydrolysis of Ala-|-Gly bond in repressor LexA.. Its function is as follows. Represses a number of genes involved in the response to DNA damage (SOS response), including recA and lexA. In the presence of single-stranded DNA, RecA interacts with LexA causing an autocatalytic cleavage which disrupts the DNA-binding part of LexA, leading to derepression of the SOS regulon and eventually DNA repair. The sequence is that of LexA repressor from Citrifermentans bemidjiense (strain ATCC BAA-1014 / DSM 16622 / JCM 12645 / Bem) (Geobacter bemidjiensis).